A 322-amino-acid chain; its full sequence is Stage V sporulation protein K (322 aa).

99 to 106 (GNPGTGKT) is a binding site for ATP.

Belongs to the CbxX/CfxQ family.

The polypeptide is Stage V sporulation protein K (spoVK) (Bacillus subtilis (strain 168)).